Reading from the N-terminus, the 463-residue chain is Golgi-associated PDZ and coiled-coil motif-containing protein (463 aa).

At S2 the chain carries N-acetylserine. Residues 85 to 201 adopt a coiled-coil conformation; it reads AQTVSQINHK…RHIAVLQAEV (117 aa). The PDZ domain maps to 289–372; the sequence is KVLLLKEDHE…EIEFEVVYVA (84 aa). Residues S402 and S405 each carry the phosphoserine modification.

As to quaternary structure, homooligomer. Interacts with FZD5. Interacts with FZD8. Interacts with GRID2 and BECN1. Interacts with CSPG5. Interacts with CLCN3. Interacts with STX6. Interacts with CFTR. Interacts with ASIC3. Interacts with GOLGA3. Interacts with NLGN1. Interacts with RHOQ. Interacts with MARCHF2; the interaction leads to CFTR ubiquitination and degradation. May interact with CACNG2. Interacts with CCDC62. Ubiquitously expressed (at protein level). Expressed in dorsal root glanglion (DRG), spinal cord and brain. Isoform 1 is preferentially expressed in whole brain (at protein level) and cerebellum. Expressed in spermatocytes and spermatides but not in Sertoli cells and spermatogonia.

Its subcellular location is the cytoplasm. The protein resides in the golgi apparatus membrane. It is found in the golgi apparatus. It localises to the trans-Golgi network membrane. The protein localises to the synapse. Its subcellular location is the postsynaptic density. The protein resides in the cell projection. It is found in the dendrite. Functionally, plays a role in intracellular protein trafficking and degradation. May regulate CFTR chloride currents and acid-induced ASIC3 currents by modulating cell surface expression of both channels. May also regulate the intracellular trafficking of the ADR1B receptor. May play a role in autophagy. Together with MARCHF2 mediates the ubiquitination and lysosomal degradation of CFTR. Overexpression results in CFTR intracellular retention and degradation in the lysosomes. The protein is Golgi-associated PDZ and coiled-coil motif-containing protein of Mus musculus (Mouse).